Consider the following 441-residue polypeptide: Gamma-glutamyl phosphate reductase (441 aa).

The protein belongs to the gamma-glutamyl phosphate reductase family.

The protein localises to the cytoplasm. It catalyses the reaction L-glutamate 5-semialdehyde + phosphate + NADP(+) = L-glutamyl 5-phosphate + NADPH + H(+). It functions in the pathway amino-acid biosynthesis; L-proline biosynthesis; L-glutamate 5-semialdehyde from L-glutamate: step 2/2. In terms of biological role, catalyzes the NADPH-dependent reduction of L-glutamate 5-phosphate into L-glutamate 5-semialdehyde and phosphate. The product spontaneously undergoes cyclization to form 1-pyrroline-5-carboxylate. The sequence is that of Gamma-glutamyl phosphate reductase from Hydrogenobaculum sp. (strain Y04AAS1).